The following is an 84-amino-acid chain: Large ribosomal subunit protein bL27 (84 aa).

Residues 1 to 22 are disordered; sequence MAHKKAGGSTRNGRDSESKRLG.

Belongs to the bacterial ribosomal protein bL27 family.

This chain is Large ribosomal subunit protein bL27, found in Shewanella amazonensis (strain ATCC BAA-1098 / SB2B).